We begin with the raw amino-acid sequence, 244 residues long: Tetraspanin-7 (244 aa).

Residues 1–11 lie on the Cytoplasmic side of the membrane; it reads METKPVITCLK. Residues 12–35 form a helical membrane-spanning segment; that stretch reads TLLIIYSFVFWITGVILLAVGVWG. At 36–51 the chain is on the extracellular side; that stretch reads KLTLGTYISLIAENST. Asn49 carries N-linked (GlcNAc...) asparagine glycosylation. Residues 52–70 traverse the membrane as a helical segment; that stretch reads NAPYVLIGTGTTIVVFGLF. Residues 71–81 are Cytoplasmic-facing; it reads GCFATCRGSPW. The helical transmembrane segment at 82–107 threads the bilayer; that stretch reads MLKLYAMFLSLVFLAELVAGISGFVF. At 108 to 208 the chain is on the extracellular side; that stretch reads RHEIKDTFLR…LVTSFMETNM (101 aa). N-linked (GlcNAc...) asparagine glycans are attached at residues Asn150, Asn153, Asn172, and Asn183. A helical membrane pass occupies residues 209-229; sequence GIIAGVAFGIAFSQLIGMLLA. Residues 230–244 lie on the Cytoplasmic side of the membrane; sequence CCLSRFITANQYEMV.

Belongs to the tetraspanin (TM4SF) family.

The protein resides in the membrane. Functionally, may be involved in cell proliferation and cell motility. The chain is Tetraspanin-7 (TSPAN7) from Pan troglodytes (Chimpanzee).